Here is a 117-residue protein sequence, read N- to C-terminus: Large ribosomal subunit protein bL19 (117 aa).

It belongs to the bacterial ribosomal protein bL19 family.

Functionally, this protein is located at the 30S-50S ribosomal subunit interface and may play a role in the structure and function of the aminoacyl-tRNA binding site. The polypeptide is Large ribosomal subunit protein bL19 (Bacteroides thetaiotaomicron (strain ATCC 29148 / DSM 2079 / JCM 5827 / CCUG 10774 / NCTC 10582 / VPI-5482 / E50)).